A 657-amino-acid chain; its full sequence is tRNA 5-methylaminomethyl-2-thiouridine biosynthesis bifunctional protein MnmC (657 aa).

Residues 1 to 233 are tRNA (mnm(5)s(2)U34)-methyltransferase; it reads MPRALEPAEP…KWQMTVASFR (233 aa). Residues 257 to 657 are FAD-dependent cmnm(5)s(2)U34 oxidoreductase; the sequence is IGAGLAGCAV…LRALRHGHTG (401 aa).

It in the N-terminal section; belongs to the methyltransferase superfamily. tRNA (mnm(5)s(2)U34)-methyltransferase family. In the C-terminal section; belongs to the DAO family. FAD is required as a cofactor.

The protein localises to the cytoplasm. It carries out the reaction 5-aminomethyl-2-thiouridine(34) in tRNA + S-adenosyl-L-methionine = 5-methylaminomethyl-2-thiouridine(34) in tRNA + S-adenosyl-L-homocysteine + H(+). Catalyzes the last two steps in the biosynthesis of 5-methylaminomethyl-2-thiouridine (mnm(5)s(2)U) at the wobble position (U34) in tRNA. Catalyzes the FAD-dependent demodification of cmnm(5)s(2)U34 to nm(5)s(2)U34, followed by the transfer of a methyl group from S-adenosyl-L-methionine to nm(5)s(2)U34, to form mnm(5)s(2)U34. The sequence is that of tRNA 5-methylaminomethyl-2-thiouridine biosynthesis bifunctional protein MnmC from Cupriavidus necator (strain ATCC 17699 / DSM 428 / KCTC 22496 / NCIMB 10442 / H16 / Stanier 337) (Ralstonia eutropha).